The following is a 212-amino-acid chain: Ribosomal RNA small subunit methyltransferase G (212 aa).

Residues glycine 72, leucine 77, 123-124 (VE), and arginine 138 each bind S-adenosyl-L-methionine.

The protein belongs to the methyltransferase superfamily. RNA methyltransferase RsmG family.

The protein resides in the cytoplasm. It carries out the reaction guanosine(527) in 16S rRNA + S-adenosyl-L-methionine = N(7)-methylguanosine(527) in 16S rRNA + S-adenosyl-L-homocysteine. Specifically methylates the N7 position of guanine in position 527 of 16S rRNA. The protein is Ribosomal RNA small subunit methyltransferase G of Histophilus somni (strain 2336) (Haemophilus somnus).